An 81-amino-acid chain; its full sequence is EC protein III (81 aa).

Belongs to the metallothionein superfamily. Type 15 family.

Binds 5 molecules of zinc. May have a role in Zn(2+) homeostasis during embryogenesis. This is EC protein III from Triticum aestivum (Wheat).